A 287-amino-acid polypeptide reads, in one-letter code: 4-hydroxybenzoate octaprenyltransferase (287 aa).

A run of 5 helical transmembrane segments spans residues 35-55 (FAAG…GVVV), 96-116 (LFGV…PLVV), 211-231 (IIAA…MLAG), 235-255 (IYGL…KLIY), and 262-282 (CFTA…ALTL).

The protein belongs to the UbiA prenyltransferase family. Mg(2+) serves as cofactor.

The protein resides in the cell inner membrane. It carries out the reaction all-trans-octaprenyl diphosphate + 4-hydroxybenzoate = 4-hydroxy-3-(all-trans-octaprenyl)benzoate + diphosphate. The protein operates within cofactor biosynthesis; ubiquinone biosynthesis. Its function is as follows. Catalyzes the prenylation of para-hydroxybenzoate (PHB) with an all-trans polyprenyl group. Mediates the second step in the final reaction sequence of ubiquinone-8 (UQ-8) biosynthesis, which is the condensation of the polyisoprenoid side chain with PHB, generating the first membrane-bound Q intermediate 3-octaprenyl-4-hydroxybenzoate. The polypeptide is 4-hydroxybenzoate octaprenyltransferase (Shewanella halifaxensis (strain HAW-EB4)).